The following is a 411-amino-acid chain: Citrate synthase (411 aa).

Active-site residues include His-304 and Asp-363.

This sequence belongs to the citrate synthase family.

It catalyses the reaction oxaloacetate + acetyl-CoA + H2O = citrate + CoA + H(+). It participates in carbohydrate metabolism; tricarboxylic acid cycle; isocitrate from oxaloacetate: step 1/2. This chain is Citrate synthase (gltA), found in Rickettsia australis.